The sequence spans 1733 residues: Desertorin synthase (1733 aa).

Residues 21 to 358 form an N-terminal acylcarrier protein transacylase domain (SAT) region; the sequence is RIRQQSRSSR…HAPTRDLTEW (338 aa). In terms of domain architecture, Ketosynthase family 3 (KS3) spans 372-799; it reads DCRIAVVGMS…GGNTALLLEE (428 aa). The span at 406 to 422 shows a compositional bias: basic and acidic residues; that stretch reads HVPPDRYDVQSHTDPTG. A disordered region spans residues 406 to 429; it reads HVPPDRYDVQSHTDPTGRRMNTSQ. Catalysis depends on for beta-ketoacyl synthase activity residues Cys544, His679, and His718. Positions 903–1211 are malonyl-CoA:ACP transacylase (MAT) domain; that stretch reads FVFSGQGSFY…DNWHTLAGSM (309 aa). The segment at 1288-1420 is N-terminal hotdog fold; the sequence is HRIVEETFWA…GTVSVGNAAS (133 aa). The PKS/mFAS DH domain maps to 1288-1598; it reads HRIVEETFWA…LRPLPRILMH (311 aa). Residues 1299 to 1594 are product template (PT) domain; that stretch reads GGRVVMESNV…AGVTLRPLPR (296 aa). His1320 functions as the Proton acceptor; for dehydratase activity in the catalytic mechanism. Residues 1448–1598 are C-terminal hotdog fold; sequence ADRLTRDTVY…LRPLPRILMH (151 aa). The Proton donor; for dehydratase activity role is filled by Asp1506. The tract at residues 1608–1659 is disordered; the sequence is HNWGNSPAKPEAKPEMVPTSGSSSAAGSPSGSSAGPLSIPERLADPSETSFQ. Positions 1627-1643 are enriched in low complexity; the sequence is SGSSSAAGSPSGSSAGP. The 75-residue stretch at 1659–1733 folds into the Carrier domain; sequence QSKASKVSKA…TVGEVKRQML (75 aa). Ser1696 is subject to O-(pantetheine 4'-phosphoryl)serine.

Pantetheine 4'-phosphate serves as cofactor.

Its pathway is secondary metabolite biosynthesis. Its function is as follows. Non-reducing polyketide synthase; part of the gene cluster that mediates the biosynthesis of the bicoumarin desertorin. The non-reducing polyketide synthase desS first catalyzes the formation of the pentaketidic 4,7-dihydroxy-5-methylcoumarin from acetyl coenzyme A and 4 malonyl coenzyme A molecules. Further O-methylation by desB leads to the formation of 7-demethylsiderin. Then, an oxidative phenol coupling catalyzed by the cytochrome P450 monooxygenase desC forms the 6,8'-dimer M-desertorin A via dimerization the monomeric precursor, 7-demethylsiderin. M-desertorin A is further converted to M-desertorin C. In Aspergillus desertorum (Emericella desertorum), this protein is Desertorin synthase.